Here is a 503-residue protein sequence, read N- to C-terminus: 3-octaprenyl-4-hydroxybenzoate carboxy-lyase (503 aa).

N176 contributes to the Mn(2+) binding site. Prenylated FMN is bound by residues 179–181, 193–195, and 198–199; these read IYR, RWL, and RG. Mn(2+) is bound at residue E242. The Proton donor role is filled by D303.

This sequence belongs to the UbiD family. Homohexamer. It depends on prenylated FMN as a cofactor. Requires Mn(2+) as cofactor.

It localises to the cell membrane. The enzyme catalyses a 4-hydroxy-3-(all-trans-polyprenyl)benzoate + H(+) = a 2-(all-trans-polyprenyl)phenol + CO2. Its pathway is cofactor biosynthesis; ubiquinone biosynthesis. Functionally, catalyzes the decarboxylation of 3-octaprenyl-4-hydroxy benzoate to 2-octaprenylphenol, an intermediate step in ubiquinone biosynthesis. The protein is 3-octaprenyl-4-hydroxybenzoate carboxy-lyase of Ralstonia nicotianae (strain ATCC BAA-1114 / GMI1000) (Ralstonia solanacearum).